The chain runs to 739 residues: MTDFSLYLVTDPHLGGGPERVAGIVEDAINGGVTVVQLRDKDADEQTFREHAMELKRVCDRLGVPLFLNDRFAVAAELSCHVHIGQGDLPYVQARRQLPGHLMIGLTIETMDQLETVIADCTRAGIALPDVVGLGPVQATDTKPDAPQAVGVDGVAAMAKVARAHGIASVAIGGVGLANAADLARTGVDGLCVVSAIMAAPSPAEAARELLDVWEAGRRVAQPRVLTIAGTDPTGGAGVQADLKSIAAAGGFGMSVITALVAQNTHGVTGVHTPPADFLDEQLESVFSDVTVDAVKLGMLGRADTVRQVTGWLRTRPHGPVILDPVMVATSGDSLLDPDATEALLELATVVDVITPNIPELAVLCGEQPAPSFDAAIEQARRFATDVGTTVIVKGGHLTGPRADNAVVYPDGSVHMVANPRVDTTNSHGTGCSLSAALATRMGAGHPVDKALDWATRWLNEALRGADALQVGSGSGPVDHFAVTRRLLRAADATPWPHLRMGAPSDGIITPSDTQSPAPALAPAGPYTRALWEATGDVLGEILDSGFIRGLGDGTLSREEFLFYIDQDAHYLRQYSRALATLSSRAPDAPAQVDWATSAAECITVEAELHRTYLNKGLAETGVSAPSPVTMAYTDFLIARSHADDYVVGAAAVLPCYWLYAEIGLILAKQNHPEHPYTDWLDTYSGEGFLAGTVKAIARVEAAMAGAGPDQQRVAAQTYLSACVHEREFFDQATRQGWN.

Positions 1 to 210 are thiamine-phosphate synthase; sequence MTDFSLYLVT…PSPAEAAREL (210 aa). 4-amino-2-methyl-5-(diphosphooxymethyl)pyrimidine-binding positions include 37–41 and N69; that span reads QLRDK. Mg(2+) contacts are provided by D70 and D88. Residue T107 participates in 4-amino-2-methyl-5-(diphosphooxymethyl)pyrimidine binding. 140–142 provides a ligand contact to 2-[(2R,5Z)-2-carboxy-4-methylthiazol-5(2H)-ylidene]ethyl phosphate; that stretch reads TDT. Position 143 (K143) interacts with 4-amino-2-methyl-5-(diphosphooxymethyl)pyrimidine. 2-[(2R,5Z)-2-carboxy-4-methylthiazol-5(2H)-ylidene]ethyl phosphate contacts are provided by residues G174 and 194-195; that span reads VS. A hydroxymethylpyrimidine/phosphomethylpyrimidine kinase region spans residues 226–481; the sequence is LTIAGTDPTG…GSGSGPVDHF (256 aa). Position 263 (Q263) interacts with 4-amino-5-hydroxymethyl-2-methylpyrimidine. The tract at residues 527-739 is thiaminase-2; that stretch reads YTRALWEATG…FDQATRQGWN (213 aa).

In the N-terminal section; belongs to the thiamine-phosphate synthase family. This sequence in the central section; belongs to the ThiD family. The protein in the C-terminal section; belongs to the thiaminase-2 family. It depends on Mg(2+) as a cofactor.

The catalysed reaction is 2-[(2R,5Z)-2-carboxy-4-methylthiazol-5(2H)-ylidene]ethyl phosphate + 4-amino-2-methyl-5-(diphosphooxymethyl)pyrimidine + 2 H(+) = thiamine phosphate + CO2 + diphosphate. It catalyses the reaction 2-(2-carboxy-4-methylthiazol-5-yl)ethyl phosphate + 4-amino-2-methyl-5-(diphosphooxymethyl)pyrimidine + 2 H(+) = thiamine phosphate + CO2 + diphosphate. It carries out the reaction 4-methyl-5-(2-phosphooxyethyl)-thiazole + 4-amino-2-methyl-5-(diphosphooxymethyl)pyrimidine + H(+) = thiamine phosphate + diphosphate. The enzyme catalyses 4-amino-5-hydroxymethyl-2-methylpyrimidine + ATP = 4-amino-2-methyl-5-(phosphooxymethyl)pyrimidine + ADP + H(+). The catalysed reaction is 4-amino-2-methyl-5-(phosphooxymethyl)pyrimidine + ATP = 4-amino-2-methyl-5-(diphosphooxymethyl)pyrimidine + ADP. It participates in cofactor biosynthesis; thiamine diphosphate biosynthesis; 4-amino-2-methyl-5-diphosphomethylpyrimidine from 5-amino-1-(5-phospho-D-ribosyl)imidazole: step 3/3. The protein operates within cofactor biosynthesis; thiamine diphosphate biosynthesis; thiamine phosphate from 4-amino-2-methyl-5-diphosphomethylpyrimidine and 4-methyl-5-(2-phosphoethyl)-thiazole: step 1/1. In terms of biological role, condenses 4-methyl-5-(beta-hydroxyethyl)thiazole monophosphate (THZ-P) and 2-methyl-4-amino-5-hydroxymethyl pyrimidine pyrophosphate (HMP-PP) to form thiamine monophosphate (TMP). Functionally, catalyzes the phosphorylation of hydroxymethylpyrimidine phosphate (HMP-P) to HMP-PP, and of HMP to HMP-P. The protein is Thiamine biosynthesis multifunctional protein ThiED (thiED) of Corynebacterium efficiens (strain DSM 44549 / YS-314 / AJ 12310 / JCM 11189 / NBRC 100395).